A 974-amino-acid chain; its full sequence is Zinc finger protein 280D (974 aa).

Glycyl lysine isopeptide (Lys-Gly) (interchain with G-Cter in SUMO2) cross-links involve residues Lys44, Lys46, Lys86, Lys99, Lys138, Lys201, Lys222, Lys245, Lys287, and Lys304. Residues 188-216 form a disordered region; that stretch reads KRPSGSDISSVNPKKPKPSENTSGIDASS. C2H2-type zinc fingers lie at residues 333–355 and 370–393; these read FKCFSCLKVLKNNIRFMNHMKHH and TTCQHCYRQFPTPFQLQCHIESTH. The C2H2-type 3; degenerate zinc finger occupies 400-424; the sequence is TICKICELSFETEQILLQHMKDNHK. 2 consecutive C2H2-type zinc fingers follow at residues 430–453 and 459–481; these read YICQVCNYRSSLFSEVESHFRTSH and LLCPFCLKVIKIATPYMHHYMKH. 3 disordered regions span residues 507-624, 751-797, and 815-974; these read TQHH…KVNT, IKTE…EGTG, and VTVS…EERS. Low complexity predominate over residues 539-557; the sequence is SGSSVTPSISPSTSTLQLS. Position 557 is a phosphoserine (Ser557). Over residues 571-587 the composition is skewed to polar residues; sequence KLTTSTPNTTISDPSKA. Residues 591–611 are compositionally biased toward low complexity; sequence KSNGSKSKNKSKVSNMQKKQS. Residues 612–624 are compositionally biased toward polar residues; that stretch reads TLSSSNKKSKVNT. Residue Lys752 forms a Glycyl lysine isopeptide (Lys-Gly) (interchain with G-Cter in SUMO2) linkage. Positions 763–775 are enriched in basic and acidic residues; sequence VSKETARHSRAEG. The span at 817 to 829 shows a compositional bias: polar residues; it reads VSDTENVSSSKNI. Residues 830 to 860 are compositionally biased toward basic and acidic residues; that stretch reads LSHDPDVGTDTMEKEEKTHHACQEMELKVDQ. The segment covering 861-884 has biased composition (polar residues); it reads SSESTNPTEAELSSETRQGLQLTS. Phosphoserine is present on residues Ser904 and Ser907. Positions 938 to 950 are enriched in polar residues; that stretch reads SANTSDTVSDQTG.

Its subcellular location is the nucleus. May function as a transcription factor. This is Zinc finger protein 280D (Znf280d) from Mus musculus (Mouse).